Here is a 334-residue protein sequence, read N- to C-terminus: MIEADRLIQPQIQAQDESIDRAMRPKMLDEYTGQDDTRAQLKVFIQAAKNRNEALDHMLIYGPPGLGKTTLAMIVANEMGVNIKSTSGPVLEKAGDLAALLTNLESGDVLFIDEIHRLSPVVEEILYPAMEDYQLDIMIGEGPAARSIKLDLPPFTLVGATTRAGALTSPLRARFGIPLRLEFYNIKDLSTIVTRSAQVMELDIDAEGAFEIARRSRGTPRIANRLLRRVRDYAQVKHDGAVTKFVAEHALDLLDVDSEGFDYMDRKLLLAIIDKFMGGPVGLDNLAAAIGEERETIEDVLEPFLIQQGFIQRTPRGRIATARAYQHFELIKPE.

The interval 4–184 (ADRLIQPQIQ…FGIPLRLEFY (181 aa)) is large ATPase domain (RuvB-L). Residues Arg-24, Gly-65, Lys-68, Thr-69, Thr-70, 131–133 (EDY), Arg-174, Tyr-184, and Arg-221 contribute to the ATP site. Thr-69 serves as a coordination point for Mg(2+). Residues 185–255 (NIKDLSTIVT…VAEHALDLLD (71 aa)) are small ATPAse domain (RuvB-S). Positions 258–334 (SEGFDYMDRK…YQHFELIKPE (77 aa)) are head domain (RuvB-H). Residues Arg-294, Arg-313, and Arg-318 each coordinate DNA.

Belongs to the RuvB family. As to quaternary structure, homohexamer. Forms an RuvA(8)-RuvB(12)-Holliday junction (HJ) complex. HJ DNA is sandwiched between 2 RuvA tetramers; dsDNA enters through RuvA and exits via RuvB. An RuvB hexamer assembles on each DNA strand where it exits the tetramer. Each RuvB hexamer is contacted by two RuvA subunits (via domain III) on 2 adjacent RuvB subunits; this complex drives branch migration. In the full resolvosome a probable DNA-RuvA(4)-RuvB(12)-RuvC(2) complex forms which resolves the HJ.

The protein localises to the cytoplasm. The enzyme catalyses ATP + H2O = ADP + phosphate + H(+). In terms of biological role, the RuvA-RuvB-RuvC complex processes Holliday junction (HJ) DNA during genetic recombination and DNA repair, while the RuvA-RuvB complex plays an important role in the rescue of blocked DNA replication forks via replication fork reversal (RFR). RuvA specifically binds to HJ cruciform DNA, conferring on it an open structure. The RuvB hexamer acts as an ATP-dependent pump, pulling dsDNA into and through the RuvAB complex. RuvB forms 2 homohexamers on either side of HJ DNA bound by 1 or 2 RuvA tetramers; 4 subunits per hexamer contact DNA at a time. Coordinated motions by a converter formed by DNA-disengaged RuvB subunits stimulates ATP hydrolysis and nucleotide exchange. Immobilization of the converter enables RuvB to convert the ATP-contained energy into a lever motion, pulling 2 nucleotides of DNA out of the RuvA tetramer per ATP hydrolyzed, thus driving DNA branch migration. The RuvB motors rotate together with the DNA substrate, which together with the progressing nucleotide cycle form the mechanistic basis for DNA recombination by continuous HJ branch migration. Branch migration allows RuvC to scan DNA until it finds its consensus sequence, where it cleaves and resolves cruciform DNA. This chain is Holliday junction branch migration complex subunit RuvB, found in Shewanella baltica (strain OS223).